A 78-amino-acid chain; its full sequence is Major outer membrane lipoprotein Lpp (78 aa).

Residues 1–20 (MNRTKLVLGAVILGSTLLAG) form the signal peptide. The N-palmitoyl cysteine moiety is linked to residue C21. The S-diacylglycerol cysteine moiety is linked to residue C21. Residues 22 to 75 (SSNAKIDQLSTDVQTLNAKVDQLSNDVTAIRSDVQAAKDDAARANQRLDNQAHS) adopt a coiled-coil conformation. 2 repeats span residues 24 to 34 (NAKIDQLSTDV) and 38 to 48 (NAKVDQLSNDV). The residue at position 78 (K78) is an N6-murein peptidoglycan lysine.

This sequence belongs to the Lpp family. As to quaternary structure, homotrimer.

It is found in the cell outer membrane. Its subcellular location is the secreted. It localises to the cell wall. Its function is as follows. A highly abundant outer membrane lipoprotein that controls the distance between the inner and outer membranes. The only protein known to be covalently linked to the peptidoglycan network (PGN). Also non-covalently binds the PGN. The link between the cell outer membrane and PGN contributes to maintenance of the structural and functional integrity of the cell envelope, and maintains the correct distance between the PGN and the outer membrane. This chain is Major outer membrane lipoprotein Lpp, found in Erwinia amylovora (Fire blight bacteria).